Here is a 215-residue protein sequence, read N- to C-terminus: ER lumen protein-retaining receptor A (215 aa).

Residues 1–2 (MN) are Lumenal-facing. A helical membrane pass occupies residues 3–21 (IFRFAGDMSHLISVLILLL). Over 22-35 (KIYATKSCAGISLK) the chain is Cytoplasmic. The chain crosses the membrane as a helical span at residues 36–53 (TQELYALVFLTRYLDLFT). Over 54–61 (DYVSLYNS) the chain is Lumenal. A helical membrane pass occupies residues 62–82 (IMKIVFIASSLAIVWCMRRHP). At 83–98 (LVRRSYDKDLDTFRHQ) the chain is on the cytoplasmic side. Residues 99 to 112 (YVVLACFVLGLILN) traverse the membrane as a helical segment. At 113 to 119 (EKFTVQE) the chain is on the lumenal side. Residues 120 to 139 (VFWAFSIYLEAVAILPQLVL) traverse the membrane as a helical segment. Residues 140–151 (LQRSGNVDNLTG) are Cytoplasmic-facing. A helical membrane pass occupies residues 152 to 170 (QYVVFLGAYRGLYIINWIY). Topologically, residues 171-181 (RYFTEDHFTRW) are lumenal. Residues 182-202 (IACVSGLVQTALYADFFYYYY) traverse the membrane as a helical segment. At 203–215 (ISWKTNTKLKLPA) the chain is on the cytoplasmic side.

It belongs to the ERD2 family.

It is found in the endoplasmic reticulum membrane. In terms of biological role, required for the retention of luminal endoplasmic reticulum proteins. Determines the specificity of the luminal ER protein retention system. Also required for normal vesicular traffic through the Golgi. This receptor recognizes H-D-E-L. The chain is ER lumen protein-retaining receptor A (ERD2A) from Arabidopsis thaliana (Mouse-ear cress).